The sequence spans 657 residues: Methionine--tRNA ligase (657 aa).

The short motif at 13-23 (YYPSGNLHIGH) is the 'HIGH' region element. A 'KMSKS' region motif is present at residues 308–312 (KMSKS). Lysine 311 is a binding site for ATP. In terms of domain architecture, tRNA-binding spans 557 to 657 (DFDKVEIKAA…SAIPNGAVIK (101 aa)).

The protein belongs to the class-I aminoacyl-tRNA synthetase family. MetG type 2B subfamily. Homodimer.

It localises to the cytoplasm. The catalysed reaction is tRNA(Met) + L-methionine + ATP = L-methionyl-tRNA(Met) + AMP + diphosphate. Functionally, is required not only for elongation of protein synthesis but also for the initiation of all mRNA translation through initiator tRNA(fMet) aminoacylation. The sequence is that of Methionine--tRNA ligase from Staphylococcus aureus (strain Mu50 / ATCC 700699).